The primary structure comprises 303 residues: CDAN1-interacting nuclease 1 (303 aa).

It localises to the nucleus. Its subcellular location is the cytoplasm. May play a role in erythroid cell differentiation. This is CDAN1-interacting nuclease 1 (cdin1) from Xenopus tropicalis (Western clawed frog).